A 134-amino-acid chain; its full sequence is Small ribosomal subunit protein uS11 (134 aa).

This sequence belongs to the universal ribosomal protein uS11 family. In terms of assembly, part of the 30S ribosomal subunit. Interacts with proteins S7 and S18. Binds to IF-3.

Its function is as follows. Located on the platform of the 30S subunit, it bridges several disparate RNA helices of the 16S rRNA. Forms part of the Shine-Dalgarno cleft in the 70S ribosome. The protein is Small ribosomal subunit protein uS11 of Frankia casuarinae (strain DSM 45818 / CECT 9043 / HFP020203 / CcI3).